Reading from the N-terminus, the 447-residue chain is Na(+)-translocating NADH-quinone reductase subunit A (447 aa).

Belongs to the NqrA family. In terms of assembly, composed of six subunits; NqrA, NqrB, NqrC, NqrD, NqrE and NqrF.

It catalyses the reaction a ubiquinone + n Na(+)(in) + NADH + H(+) = a ubiquinol + n Na(+)(out) + NAD(+). NQR complex catalyzes the reduction of ubiquinone-1 to ubiquinol by two successive reactions, coupled with the transport of Na(+) ions from the cytoplasm to the periplasm. NqrA to NqrE are probably involved in the second step, the conversion of ubisemiquinone to ubiquinol. The chain is Na(+)-translocating NADH-quinone reductase subunit A from Neisseria meningitidis serogroup C / serotype 2a (strain ATCC 700532 / DSM 15464 / FAM18).